A 236-amino-acid polypeptide reads, in one-letter code: Putative protein ZBED10P (236 aa).

The sequence is that of Putative protein ZBED10P from Homo sapiens (Human).